A 493-amino-acid chain; its full sequence is MQWIRGGSGMLITGDSIVSAEAVWDHVTMANRGVAFKAGDVIKVLDASNKDWWWGQIDDEEGWFPASFVRLWVNQEDGVEEGPSDVQNGHLDPNSDCLCLGRPLQNRDQMRANVINEIMSTERHYIKHLKDICEGYLKQCRKRRDMFSDEQLKVIFGNIEDIYRFQMGFVRDLEKQYNNDDPHLSEIGPCFLEHQDGFWIYSEYCNNHLDACMELSKLMKDSRYQHFFEACRLLQQMIDIAIDGFLLTPVQKICKYPLQLAELLKYTAQDHSDYRYVAAALAVMRNVTQQINERKRRLENIDKIAQWQASVLDWEGDDILDRSSELIYTGEMAWIYQPYGRNQQRVFFLFDHQMVLCKKDLIRRDILYYKGRIDMDKYEVIDIEDGRDDDFNVSMKNAFKLHNKETEEVHLFFAKKLEEKIRWLRAFREERKMVQEDEKIGFEISENQKRQAAMTVRKASKQKGRVGEEENQSLELKRACEVLQRLWSPGKKS.

The SH3 domain occupies 15–74; the sequence is DSIVSAEAVWDHVTMANRGVAFKAGDVIKVLDASNKDWWWGQIDDEEGWFPASFVRLWVN. An interaction with GPHN region spans residues 107–117; that stretch reads RDQMRANVINE. In terms of domain architecture, DH spans 110–294; the sequence is MRANVINEIM…RNVTQQINER (185 aa). The PH domain maps to 325–432; the sequence is ELIYTGEMAW…WLRAFREERK (108 aa). Positions 453-473 are disordered; the sequence is AMTVRKASKQKGRVGEEENQS.

In terms of assembly, interacts with GPHN. In terms of tissue distribution, detected in brain, throughout the gray matter. Detected at low levels in heart and skeletal muscle.

It is found in the cytoplasm. The protein resides in the postsynaptic density. Functionally, acts as a guanine nucleotide exchange factor (GEF) for CDC42. Promotes formation of GPHN clusters. This is Rho guanine nucleotide exchange factor 9 (Arhgef9) from Rattus norvegicus (Rat).